The following is a 454-amino-acid chain: UDP-N-acetylmuramate--L-alanine ligase (454 aa).

An ATP-binding site is contributed by 113–119 (GSHGKTT).

This sequence belongs to the MurCDEF family.

It is found in the cytoplasm. The catalysed reaction is UDP-N-acetyl-alpha-D-muramate + L-alanine + ATP = UDP-N-acetyl-alpha-D-muramoyl-L-alanine + ADP + phosphate + H(+). It participates in cell wall biogenesis; peptidoglycan biosynthesis. In terms of biological role, cell wall formation. In Sulfurihydrogenibium sp. (strain YO3AOP1), this protein is UDP-N-acetylmuramate--L-alanine ligase.